A 333-amino-acid polypeptide reads, in one-letter code: Tetraacyldisaccharide 4'-kinase (333 aa).

Position 55–62 (55–62 (TAGGNGKT)) interacts with ATP.

Belongs to the LpxK family.

It catalyses the reaction a lipid A disaccharide + ATP = a lipid IVA + ADP + H(+). It participates in glycolipid biosynthesis; lipid IV(A) biosynthesis; lipid IV(A) from (3R)-3-hydroxytetradecanoyl-[acyl-carrier-protein] and UDP-N-acetyl-alpha-D-glucosamine: step 6/6. Transfers the gamma-phosphate of ATP to the 4'-position of a tetraacyldisaccharide 1-phosphate intermediate (termed DS-1-P) to form tetraacyldisaccharide 1,4'-bis-phosphate (lipid IVA). The polypeptide is Tetraacyldisaccharide 4'-kinase (Proteus mirabilis (strain HI4320)).